A 195-amino-acid polypeptide reads, in one-letter code: Peptidyl-tRNA hydrolase (195 aa).

Tyr18 provides a ligand contact to tRNA. The Proton acceptor role is filled by His23. Positions 69, 71, and 117 each coordinate tRNA.

This sequence belongs to the PTH family. In terms of assembly, monomer.

It is found in the cytoplasm. It catalyses the reaction an N-acyl-L-alpha-aminoacyl-tRNA + H2O = an N-acyl-L-amino acid + a tRNA + H(+). Functionally, hydrolyzes ribosome-free peptidyl-tRNAs (with 1 or more amino acids incorporated), which drop off the ribosome during protein synthesis, or as a result of ribosome stalling. Catalyzes the release of premature peptidyl moieties from peptidyl-tRNA molecules trapped in stalled 50S ribosomal subunits, and thus maintains levels of free tRNAs and 50S ribosomes. This is Peptidyl-tRNA hydrolase from Nitrosomonas eutropha (strain DSM 101675 / C91 / Nm57).